Reading from the N-terminus, the 565-residue chain is Periplasmic trehalase (565 aa).

The N-terminal stretch at 1 to 30 is a signal peptide; sequence MKSPAPSRPQKMALIPACIFLCFAALSVQA. Substrate-binding positions include arginine 152, 159 to 160, asparagine 196, 205 to 207, 277 to 279, and glycine 310; these read WD, RSQ, and RPE. Residues aspartate 312 and glutamate 496 each act as proton donor/acceptor in the active site. Glutamate 511 contributes to the substrate binding site. A disordered region spans residues 538–565; it reads PCDNVPATRPTVKSATTQPSTKEAQPTP. Residues 548–565 are compositionally biased toward polar residues; the sequence is TVKSATTQPSTKEAQPTP.

This sequence belongs to the glycosyl hydrolase 37 family. As to quaternary structure, monomer.

The protein localises to the periplasm. It carries out the reaction alpha,alpha-trehalose + H2O = alpha-D-glucose + beta-D-glucose. Provides the cells with the ability to utilize trehalose at high osmolarity by splitting it into glucose molecules that can subsequently be taken up by the phosphotransferase-mediated uptake system. This Escherichia coli (strain 55989 / EAEC) protein is Periplasmic trehalase.